A 943-amino-acid polypeptide reads, in one-letter code: Translation initiation factor IF-2 (943 aa).

Positions 29 to 357 (LSVKSHSSSV…KPVTERKFHE (329 aa)) are disordered. Basic and acidic residues-rich tracts occupy residues 69-82 (PKEE…DKAS), 112-137 (FKAE…DNRN), 145-155 (QGKRHNNDRRN), 163-196 (DHNK…RDNA), and 224-253 (RQSE…EKQQ). The segment covering 254 to 266 (AEVAVQKAAAETK) has biased composition (low complexity). Residues 296–309 (KSRDNRRVNEDGPK) are compositionally biased toward basic and acidic residues. Low complexity predominate over residues 313–332 (NNKWNNQNQVRNQRNSNWNK). One can recognise a tr-type G domain in the interval 445 to 614 (ERAPVVTIMG…LLVAEVEELK (170 aa)). The segment at 454-461 (GHVDHGKT) is G1. Residue 454–461 (GHVDHGKT) coordinates GTP. Residues 479-483 (GITQH) are G2. The tract at residues 500-503 (DTPG) is G3. GTP is bound by residues 500–504 (DTPGH) and 554–557 (NKID). Positions 554–557 (NKID) are G4. The G5 stretch occupies residues 590–592 (SAK).

It belongs to the TRAFAC class translation factor GTPase superfamily. Classic translation factor GTPase family. IF-2 subfamily.

It is found in the cytoplasm. In terms of biological role, one of the essential components for the initiation of protein synthesis. Protects formylmethionyl-tRNA from spontaneous hydrolysis and promotes its binding to the 30S ribosomal subunits. Also involved in the hydrolysis of GTP during the formation of the 70S ribosomal complex. This chain is Translation initiation factor IF-2, found in Streptococcus thermophilus (strain CNRZ 1066).